Here is a 438-residue protein sequence, read N- to C-terminus: Probable inactive protein kinase 38 (438 aa).

The Protein kinase domain occupies 77-340; that stretch reads PRFRLALGKG…FTELQPQYFL (264 aa).

The protein belongs to the protein kinase superfamily. Tyr protein kinase family.

In Equus caballus (Horse), this protein is Probable inactive protein kinase 38 (36).